The sequence spans 131 residues: Small ribosomal subunit protein uS8 (131 aa).

This sequence belongs to the universal ribosomal protein uS8 family. In terms of assembly, part of the 30S ribosomal subunit. Contacts proteins S5 and S12.

One of the primary rRNA binding proteins, it binds directly to 16S rRNA central domain where it helps coordinate assembly of the platform of the 30S subunit. The sequence is that of Small ribosomal subunit protein uS8 from Bordetella petrii (strain ATCC BAA-461 / DSM 12804 / CCUG 43448).